The following is a 164-amino-acid chain: Peptidyl-prolyl cis-trans isomerase A-like 4H (164 aa).

The PPIase cyclophilin-type domain occupies 7–163 (FFDITVDGKP…KKITIADCGQ (157 aa)). Residues Asn71 and Asn108 are each glycosylated (N-linked (GlcNAc...) asparagine).

This sequence belongs to the cyclophilin-type PPIase family. PPIase A subfamily.

It is found in the cytoplasm. The catalysed reaction is [protein]-peptidylproline (omega=180) = [protein]-peptidylproline (omega=0). In terms of biological role, PPIases accelerate the folding of proteins. It catalyzes the cis-trans isomerization of proline imidic peptide bonds in oligopeptides. The chain is Peptidyl-prolyl cis-trans isomerase A-like 4H from Homo sapiens (Human).